The sequence spans 363 residues: Peptide-N(4)-(N-acetyl-beta-glucosaminyl)asparagine amidase (363 aa).

Residues Cys129, Cys132, Cys165, and Cys168 each contribute to the Zn(2+) site. The active-site Nucleophile is Cys191. Catalysis depends on residues His218 and Asp235. Glu238 lines the substrate pocket. A disordered region spans residues 325–363 (RGKTQETKSESVSAASKSSNRGRESGSADWKAQRGEDGK). The segment covering 334–343 (ESVSAASKSS) has biased composition (low complexity). Residues 345–363 (RGRESGSADWKAQRGEDGK) show a composition bias toward basic and acidic residues.

Belongs to the transglutaminase-like superfamily. PNGase family. As to quaternary structure, interacts with RAD23 subunit of 26S proteasome. It depends on Zn(2+) as a cofactor.

It localises to the cytoplasm. It is found in the nucleus. It carries out the reaction Hydrolysis of an N(4)-(acetyl-beta-D-glucosaminyl)asparagine residue in which the glucosamine residue may be further glycosylated, to yield a (substituted) N-acetyl-beta-D-glucosaminylamine and a peptide containing an aspartate residue.. With respect to regulation, inhibited by Z-VAD-fmk, a well-known caspase inhibitor. Also inhibited by Man9GlcNAc2-iodoacetoamide. Both molecules inhibit enzyme activity through covalent binding of the carbohydrate to the single Cys-191 residue. Functionally, specifically deglycosylates the denatured form of N-linked glycoproteins in the cytoplasm and assists their proteasome-mediated degradation. Cleaves the beta-aspartyl-glucosamine (GlcNAc) of the glycan and the amide side chain of Asn, converting Asn to Asp. Prefers proteins containing high-mannose over those bearing complex type oligosaccharides. Can recognize misfolded proteins in the endoplasmic reticulum that are exported to the cytosol to be destroyed and deglycosylate them, while it has no activity toward native proteins. Deglycosylation is a prerequisite for subsequent proteasome-mediated degradation of some, but not all, misfolded glycoproteins. Involved in the formation of free oligosaccharide in cytosol. This is Peptide-N(4)-(N-acetyl-beta-glucosaminyl)asparagine amidase (PNG1) from Saccharomyces cerevisiae (strain ATCC 204508 / S288c) (Baker's yeast).